The chain runs to 557 residues: Dihydroxy-acid dehydratase (557 aa).

A Mg(2+)-binding site is contributed by Asp78. Cys119 is a binding site for [2Fe-2S] cluster. Positions 120 and 121 each coordinate Mg(2+). Lys121 bears the N6-carboxylysine mark. A [2Fe-2S] cluster-binding site is contributed by Cys192. Glu442 provides a ligand contact to Mg(2+). Ser468 serves as the catalytic Proton acceptor.

Belongs to the IlvD/Edd family. Homodimer. It depends on [2Fe-2S] cluster as a cofactor. The cofactor is Mg(2+).

The catalysed reaction is (2R)-2,3-dihydroxy-3-methylbutanoate = 3-methyl-2-oxobutanoate + H2O. It catalyses the reaction (2R,3R)-2,3-dihydroxy-3-methylpentanoate = (S)-3-methyl-2-oxopentanoate + H2O. It functions in the pathway amino-acid biosynthesis; L-isoleucine biosynthesis; L-isoleucine from 2-oxobutanoate: step 3/4. Its pathway is amino-acid biosynthesis; L-valine biosynthesis; L-valine from pyruvate: step 3/4. In terms of biological role, functions in the biosynthesis of branched-chain amino acids. Catalyzes the dehydration of (2R,3R)-2,3-dihydroxy-3-methylpentanoate (2,3-dihydroxy-3-methylvalerate) into 2-oxo-3-methylpentanoate (2-oxo-3-methylvalerate) and of (2R)-2,3-dihydroxy-3-methylbutanoate (2,3-dihydroxyisovalerate) into 2-oxo-3-methylbutanoate (2-oxoisovalerate), the penultimate precursor to L-isoleucine and L-valine, respectively. In Bacillus cereus (strain ZK / E33L), this protein is Dihydroxy-acid dehydratase.